Here is a 174-residue protein sequence, read N- to C-terminus: Large ribosomal subunit protein uL6 (174 aa).

Belongs to the universal ribosomal protein uL6 family. Part of the 50S ribosomal subunit.

This protein binds to the 23S rRNA, and is important in its secondary structure. It is located near the subunit interface in the base of the L7/L12 stalk, and near the tRNA binding site of the peptidyltransferase center. The protein is Large ribosomal subunit protein uL6 of Acidithiobacillus ferrooxidans (strain ATCC 23270 / DSM 14882 / CIP 104768 / NCIMB 8455) (Ferrobacillus ferrooxidans (strain ATCC 23270)).